The sequence spans 262 residues: Shikimate dehydrogenase (NADP(+)) (262 aa).

Residues 14–16 and Thr60 each bind shikimate; that span reads SAS. The Proton acceptor role is filled by Lys64. Residues Asn85 and Asp100 each contribute to the shikimate site. Residues 121–125, 145–150, and Phe203 each bind NADP(+); these read GAGGA and NRTAER. Residue Tyr205 coordinates shikimate. Residue Gly227 participates in NADP(+) binding.

It belongs to the shikimate dehydrogenase family. In terms of assembly, homodimer.

The catalysed reaction is shikimate + NADP(+) = 3-dehydroshikimate + NADPH + H(+). The protein operates within metabolic intermediate biosynthesis; chorismate biosynthesis; chorismate from D-erythrose 4-phosphate and phosphoenolpyruvate: step 4/7. Its function is as follows. Involved in the biosynthesis of the chorismate, which leads to the biosynthesis of aromatic amino acids. Catalyzes the reversible NADPH linked reduction of 3-dehydroshikimate (DHSA) to yield shikimate (SA). In Pyrobaculum aerophilum (strain ATCC 51768 / DSM 7523 / JCM 9630 / CIP 104966 / NBRC 100827 / IM2), this protein is Shikimate dehydrogenase (NADP(+)).